A 311-amino-acid polypeptide reads, in one-letter code: 5'-adenylylsulfate reductase-like 3 (311 aa).

An N-terminal signal peptide occupies residues 1–22 (MATRLLCWTALLLPIIAATAAA). The Thioredoxin domain maps to 23–164 (SPLPEACPVP…LAAFYRDVSG (142 aa)). The N-linked (GlcNAc...) asparagine glycan is linked to Asn-139. A helical transmembrane segment spans residues 210–230 (LALATAFVILRLLYLLFPKIG). N-linked (GlcNAc...) asparagine glycans are attached at residues Asn-281 and Asn-305.

Its subcellular location is the membrane. This chain is 5'-adenylylsulfate reductase-like 3 (APRL3), found in Oryza sativa subsp. japonica (Rice).